We begin with the raw amino-acid sequence, 92 residues long: UPF0728 protein C10orf53 homolog (92 aa).

Belongs to the UPF0728 family.

The chain is UPF0728 protein C10orf53 homolog from Danio rerio (Zebrafish).